We begin with the raw amino-acid sequence, 197 residues long: Holliday junction branch migration complex subunit RuvA (197 aa).

The tract at residues 1–64 is domain I; that stretch reads MYEYIKGKYI…EDFIGIYGFL (64 aa). The segment at 65–143 is domain II; that stretch reads TKDELSMFKL…IDISEEDDEQ (79 aa). The interval 144–148 is flexible linker; the sequence is IINKV. Residues 149 to 197 form a domain III region; that stretch reads TDDKKVLEAVAALVTLGYSEKEASKVINLCDKNNSLEQIIKEALKHLMK.

This sequence belongs to the RuvA family. In terms of assembly, homotetramer. Forms an RuvA(8)-RuvB(12)-Holliday junction (HJ) complex. HJ DNA is sandwiched between 2 RuvA tetramers; dsDNA enters through RuvA and exits via RuvB. An RuvB hexamer assembles on each DNA strand where it exits the tetramer. Each RuvB hexamer is contacted by two RuvA subunits (via domain III) on 2 adjacent RuvB subunits; this complex drives branch migration. In the full resolvosome a probable DNA-RuvA(4)-RuvB(12)-RuvC(2) complex forms which resolves the HJ.

It localises to the cytoplasm. The RuvA-RuvB-RuvC complex processes Holliday junction (HJ) DNA during genetic recombination and DNA repair, while the RuvA-RuvB complex plays an important role in the rescue of blocked DNA replication forks via replication fork reversal (RFR). RuvA specifically binds to HJ cruciform DNA, conferring on it an open structure. The RuvB hexamer acts as an ATP-dependent pump, pulling dsDNA into and through the RuvAB complex. HJ branch migration allows RuvC to scan DNA until it finds its consensus sequence, where it cleaves and resolves the cruciform DNA. The chain is Holliday junction branch migration complex subunit RuvA from Clostridium botulinum (strain Loch Maree / Type A3).